The primary structure comprises 26 residues: Conotoxin Eb6.18 (26 aa).

2 disulfides stabilise this stretch: cysteine 7/cysteine 18 and cysteine 13/cysteine 25.

Belongs to the conotoxin O1 superfamily. As to expression, expressed by the venom duct.

It is found in the secreted. In Conus ebraeus (Hebrew cone), this protein is Conotoxin Eb6.18 (E1).